The chain runs to 344 residues: Anthranilate phosphoribosyltransferase (344 aa).

Residues Gly80, 83-84 (GD), Thr88, 90-93 (NVST), 108-116 (KHGNRSVSS), and Ser120 contribute to the 5-phospho-alpha-D-ribose 1-diphosphate site. An anthranilate-binding site is contributed by Gly80. Ser92 contacts Mg(2+). Anthranilate is bound at residue Asn111. An anthranilate-binding site is contributed by Arg166. Asp225 and Glu226 together coordinate Mg(2+).

This sequence belongs to the anthranilate phosphoribosyltransferase family. In terms of assembly, homodimer. It depends on Mg(2+) as a cofactor.

The enzyme catalyses N-(5-phospho-beta-D-ribosyl)anthranilate + diphosphate = 5-phospho-alpha-D-ribose 1-diphosphate + anthranilate. Its pathway is amino-acid biosynthesis; L-tryptophan biosynthesis; L-tryptophan from chorismate: step 2/5. Catalyzes the transfer of the phosphoribosyl group of 5-phosphorylribose-1-pyrophosphate (PRPP) to anthranilate to yield N-(5'-phosphoribosyl)-anthranilate (PRA). This Legionella pneumophila (strain Corby) protein is Anthranilate phosphoribosyltransferase.